Reading from the N-terminus, the 521-residue chain is Probable feruloyl esterase B-2 (521 aa).

The signal sequence occupies residues 1 to 19 (MKVSLWLTLLGVNLSLALA). N-linked (GlcNAc...) asparagine glycosylation is found at Asn-13, Asn-53, Asn-85, Asn-98, and Asn-138. Disulfide bonds link Cys-28/Cys-75 and Cys-63/Cys-114. Cystine bridges form between Cys-187/Cys-440, Cys-257/Cys-274, Cys-283/Cys-291, and Cys-506/Cys-520. Ser-188 (acyl-ester intermediate) is an active-site residue. A glycan (N-linked (GlcNAc...) asparagine) is linked at Asn-235. 5 residues coordinate Ca(2+): Asp-258, Asp-261, Val-263, Asp-265, and Ile-267. The Charge relay system role is filled by Asp-399. Asn-419 carries N-linked (GlcNAc...) asparagine glycosylation. His-439 functions as the Charge relay system in the catalytic mechanism.

Belongs to the tannase family.

Its subcellular location is the secreted. The enzyme catalyses feruloyl-polysaccharide + H2O = ferulate + polysaccharide.. In terms of biological role, involved in degradation of plant cell walls. Hydrolyzes the feruloyl-arabinose ester bond in arabinoxylans as well as the feruloyl-galactose and feruloyl-arabinose ester bonds in pectin. The protein is Probable feruloyl esterase B-2 (faeB-2) of Aspergillus flavus (strain ATCC 200026 / FGSC A1120 / IAM 13836 / NRRL 3357 / JCM 12722 / SRRC 167).